Here is a 166-residue protein sequence, read N- to C-terminus: Small ribosomal subunit protein uS5 (166 aa).

Positions 11-74 constitute an S5 DRBM domain; sequence LQEKLIAVNR…EKARRNMITV (64 aa).

The protein belongs to the universal ribosomal protein uS5 family. In terms of assembly, part of the 30S ribosomal subunit. Contacts proteins S4 and S8.

In terms of biological role, with S4 and S12 plays an important role in translational accuracy. Located at the back of the 30S subunit body where it stabilizes the conformation of the head with respect to the body. In Histophilus somni (strain 2336) (Haemophilus somnus), this protein is Small ribosomal subunit protein uS5.